Here is a 284-residue protein sequence, read N- to C-terminus: Diaminopimelate epimerase (284 aa).

3 residues coordinate substrate: N21, Q54, and N74. Residue C83 is the Proton donor of the active site. Substrate is bound by residues 84 to 85 (GN), N167, N200, and 218 to 219 (ER). The active-site Proton acceptor is the C227. 228 to 229 (GS) provides a ligand contact to substrate.

This sequence belongs to the diaminopimelate epimerase family. Homodimer.

Its subcellular location is the cytoplasm. The catalysed reaction is (2S,6S)-2,6-diaminopimelate = meso-2,6-diaminopimelate. It functions in the pathway amino-acid biosynthesis; L-lysine biosynthesis via DAP pathway; DL-2,6-diaminopimelate from LL-2,6-diaminopimelate: step 1/1. Catalyzes the stereoinversion of LL-2,6-diaminopimelate (L,L-DAP) to meso-diaminopimelate (meso-DAP), a precursor of L-lysine and an essential component of the bacterial peptidoglycan. In Buchnera aphidicola subsp. Acyrthosiphon pisum (strain APS) (Acyrthosiphon pisum symbiotic bacterium), this protein is Diaminopimelate epimerase.